Here is a 445-residue protein sequence, read N- to C-terminus: Endoplasmic reticulum membrane adapter protein XK (445 aa).

Topologically, residues 1–2 are cytoplasmic; it reads MK. The helical transmembrane segment at 3–23 threads the bilayer; that stretch reads FPASVLASVFLFVAETMAALY. At 24-37 the chain is on the extracellular side; the sequence is LSSTYRSAGDRMWQ. Residues 38–58 traverse the membrane as a helical segment; sequence ALTLFFSLMPCTLVQLTLLFV. The Cytoplasmic portion of the chain corresponds to 59 to 68; the sequence is HRDLSRDRPL. Residues 69-89 traverse the membrane as a helical segment; the sequence is VLLMHLLQLGPLYRCCEVFCI. Over 90 to 140 the chain is Extracellular; that stretch reads YCQSDQNEEPYVSITKKRQMPKDGLSEEVEKEVGQSEGKLFTHRSAFSRAS. The residue at position 115 (S115) is a Phosphoserine. The helical transmembrane segment at 141-161 threads the bilayer; it reads VIQAFLGSAPQLTLQLYITVL. Topologically, residues 162–170 are cytoplasmic; the sequence is EQNITTGRF. A helical transmembrane segment spans residues 171 to 191; that stretch reads IMVLSLLSIVYGALRCNILAI. Residues 192–207 are Extracellular-facing; the sequence is KIKYDEYEVKVKPLAY. The helical transmembrane segment at 208 to 228 threads the bilayer; the sequence is VCIFLWRSFEIATRVIVLVLF. At 229–234 the chain is on the cytoplasmic side; that stretch reads TSVLKI. Residues 235 to 255 form a helical membrane-spanning segment; that stretch reads WVVVVILVNFFSFFLYPWILF. At 256-276 the chain is on the extracellular side; that stretch reads WNSGSPFPENIEKALTRVGTT. Residues 277–297 form a helical membrane-spanning segment; the sequence is IVLGFLTLLYAGINMFCWSAV. Residues 298–316 lie on the Cytoplasmic side of the membrane; the sequence is QLKIDNPELISKSQNWYRL. Residues 317–337 form a helical membrane-spanning segment; the sequence is LIYYMMRFVENSVLLLLWFFF. The Extracellular segment spans residues 338 to 348; it reads KTDIYMYVCAP. Residues 349 to 369 form a helical membrane-spanning segment; the sequence is LLILQLLIGYCTSILFMLVFY. The Cytoplasmic segment spans residues 370-445; the sequence is QFFHPCKKLF…IWTAVDLCST (76 aa).

The protein belongs to the XK family. Heterodimer with Kell; disulfide-linked. Interacts with VPS13A.

It localises to the endoplasmic reticulum membrane. Recruits the lipid transfer protein VPS13A from lipid droplets to the endoplasmic reticulum (ER) membrane. The polypeptide is Endoplasmic reticulum membrane adapter protein XK (Rattus norvegicus (Rat)).